Reading from the N-terminus, the 120-residue chain is Large ribosomal subunit protein bL12 (120 aa).

This sequence belongs to the bacterial ribosomal protein bL12 family. In terms of assembly, homodimer. Part of the ribosomal stalk of the 50S ribosomal subunit. Forms a multimeric L10(L12)X complex, where L10 forms an elongated spine to which 2 to 4 L12 dimers bind in a sequential fashion. Binds GTP-bound translation factors.

Its function is as follows. Forms part of the ribosomal stalk which helps the ribosome interact with GTP-bound translation factors. Is thus essential for accurate translation. This Listeria welshimeri serovar 6b (strain ATCC 35897 / DSM 20650 / CCUG 15529 / CIP 8149 / NCTC 11857 / SLCC 5334 / V8) protein is Large ribosomal subunit protein bL12.